The following is a 170-amino-acid chain: Phosphopantetheine adenylyltransferase (170 aa).

Substrate is bound at residue Thr-14. Residues 14-15 (TF) and His-22 each bind ATP. Positions 46, 78, and 92 each coordinate substrate. ATP is bound by residues 93–95 (GLR), Glu-103, and 128–134 (WLYISST).

It belongs to the bacterial CoaD family. As to quaternary structure, homohexamer. It depends on Mg(2+) as a cofactor.

The protein resides in the cytoplasm. The catalysed reaction is (R)-4'-phosphopantetheine + ATP + H(+) = 3'-dephospho-CoA + diphosphate. The protein operates within cofactor biosynthesis; coenzyme A biosynthesis; CoA from (R)-pantothenate: step 4/5. In terms of biological role, reversibly transfers an adenylyl group from ATP to 4'-phosphopantetheine, yielding dephospho-CoA (dPCoA) and pyrophosphate. This chain is Phosphopantetheine adenylyltransferase, found in Oleidesulfovibrio alaskensis (strain ATCC BAA-1058 / DSM 17464 / G20) (Desulfovibrio alaskensis).